Reading from the N-terminus, the 175-residue chain is Orotate phosphoribosyltransferase (175 aa).

5-phospho-alpha-D-ribose 1-diphosphate contacts are provided by residues Arg-88, Lys-89, Lys-92, and 114-122 (EDVVTTARG). 2 residues coordinate orotate: Thr-118 and Arg-146.

It belongs to the purine/pyrimidine phosphoribosyltransferase family. PyrE subfamily. Homodimer. Requires Mg(2+) as cofactor.

The catalysed reaction is orotidine 5'-phosphate + diphosphate = orotate + 5-phospho-alpha-D-ribose 1-diphosphate. It functions in the pathway pyrimidine metabolism; UMP biosynthesis via de novo pathway; UMP from orotate: step 1/2. Functionally, catalyzes the transfer of a ribosyl phosphate group from 5-phosphoribose 1-diphosphate to orotate, leading to the formation of orotidine monophosphate (OMP). This is Orotate phosphoribosyltransferase from Methanocella arvoryzae (strain DSM 22066 / NBRC 105507 / MRE50).